The primary structure comprises 283 residues: Non-selective voltage-gated ion channel VDAC3 (283 aa).

The residue at position 2 (Cys-2) is an N-acetylcysteine. A Phosphothreonine modification is found at Thr-4. N6-acetyllysine is present on residues Lys-12, Lys-15, and Lys-20. 2 beta stranded membrane passes run 26–35 (MVKIDLKTKS) and 39–47 (VEFSTSGHA). Lys-53 is covalently cross-linked (Glycyl lysine isopeptide (Lys-Gly) (interchain with G-Cter in ubiquitin)). The next 3 membrane-spanning stretches (beta stranded) occupy residues 54–64 (ASGNLETKYKV), 69–76 (LTFTQKWN), and 80–89 (TLGTEISWEN). Position 90 is an N6-acetyllysine (Lys-90). Residues 95-104 (LKLTLDTIFV) form a beta stranded membrane-spanning segment. Residues Lys-109 and Lys-110 each participate in a glycyl lysine isopeptide (Lys-Gly) (interchain with G-Cter in ubiquitin) cross-link. 10 beta stranded membrane-spanning segments follow: residues 111–120 (SGKLKASYRR), 123–130 (FSLGSNVD), 137–145 (TIYGWAVLA), 150–158 (LAGYQMSFD), 163–175 (KLSQNNFALGYKA), 178–185 (FQLHTHVN), 189–198 (EFGGSIYQKV), 202–211 (IETSINLAWT), 218–227 (RFGIAAKYKL), and 231–238 (TSLSAKVN). A Phosphoserine modification is found at Ser-241. Residues 242 to 244 (LIG) and 260 to 264 (SALID) each bind NAD(+). 2 beta stranded membrane-spanning segments follow: residues 242 to 251 (LIGLGYTQTL) and 254 to 263 (GVKLTLSALI). Residue Lys-266 is modified to N6-acetyllysine; alternate. Lys-266 is covalently cross-linked (Glycyl lysine isopeptide (Lys-Gly) (interchain with G-Cter in ubiquitin); alternate). A beta stranded transmembrane segment spans residues 273–282 (HKVGLGFELE).

This sequence belongs to the eukaryotic mitochondrial porin family. As to quaternary structure, interacts with ARMC12 in a TBC1D21-dependent manner. Interacts with MISFA. Post-translationally, ubiquitinated by PRKN during mitophagy, leading to its degradation and enhancement of mitophagy. Deubiquitinated by USP30. As to expression, highest levels of expression detected in testis, less but still abundant expression in heart, kidney, brain, and skeletal muscle.

The protein resides in the mitochondrion outer membrane. It is found in the membrane. The enzyme catalyses chloride(in) = chloride(out). The catalysed reaction is K(+)(in) = K(+)(out). Non-selective voltage-gated ion channel that mediates the transport of anions and cations through the mitochondrion outer membrane and plasma membrane. Forms a high-conducting channel with a stable open state and a voltage-induced closure with a mild preference for anions over cations. Involved in male fertility and sperm mitochondrial sheath formation. This chain is Non-selective voltage-gated ion channel VDAC3, found in Mus musculus (Mouse).